Here is a 504-residue protein sequence, read N- to C-terminus: Lysine--tRNA ligase (504 aa).

Residues Glu-411 and Glu-418 each contribute to the Mg(2+) site.

Belongs to the class-II aminoacyl-tRNA synthetase family. As to quaternary structure, homodimer. It depends on Mg(2+) as a cofactor.

Its subcellular location is the cytoplasm. The enzyme catalyses tRNA(Lys) + L-lysine + ATP = L-lysyl-tRNA(Lys) + AMP + diphosphate. This is Lysine--tRNA ligase from Clostridium botulinum (strain ATCC 19397 / Type A).